The chain runs to 538 residues: Ribulokinase 1 (538 aa).

Belongs to the ribulokinase family.

It carries out the reaction D-ribulose + ATP = D-ribulose 5-phosphate + ADP + H(+). It catalyses the reaction L-ribulose + ATP = L-ribulose 5-phosphate + ADP + H(+). It functions in the pathway carbohydrate degradation; L-arabinose degradation via L-ribulose; D-xylulose 5-phosphate from L-arabinose (bacterial route): step 2/3. This chain is Ribulokinase 1, found in Staphylococcus saprophyticus subsp. saprophyticus (strain ATCC 15305 / DSM 20229 / NCIMB 8711 / NCTC 7292 / S-41).